We begin with the raw amino-acid sequence, 79 residues long: Sec-independent protein translocase protein TatA (79 aa).

Residues methionine 1–glycine 21 form a helical membrane-spanning segment. The interval methionine 43–alanine 79 is disordered. Over residues glutamate 46 to alanine 57 the composition is skewed to basic and acidic residues. Over residues alanine 58 to alanine 67 the composition is skewed to low complexity. The span at threonine 68–alanine 79 shows a compositional bias: basic and acidic residues.

The protein belongs to the TatA/E family. As to quaternary structure, the Tat system comprises two distinct complexes: a TatABC complex, containing multiple copies of TatA, TatB and TatC subunits, and a separate TatA complex, containing only TatA subunits. Substrates initially bind to the TatABC complex, which probably triggers association of the separate TatA complex to form the active translocon.

The protein localises to the cell inner membrane. Part of the twin-arginine translocation (Tat) system that transports large folded proteins containing a characteristic twin-arginine motif in their signal peptide across membranes. TatA could form the protein-conducting channel of the Tat system. The protein is Sec-independent protein translocase protein TatA of Shewanella baltica (strain OS223).